The chain runs to 284 residues: Release factor glutamine methyltransferase (284 aa).

S-adenosyl-L-methionine is bound by residues 121–125, aspartate 144, tryptophan 172, and asparagine 188; that span reads GTGTG. 188-191 provides a ligand contact to substrate; that stretch reads NPPY.

The protein belongs to the protein N5-glutamine methyltransferase family. PrmC subfamily.

It catalyses the reaction L-glutaminyl-[peptide chain release factor] + S-adenosyl-L-methionine = N(5)-methyl-L-glutaminyl-[peptide chain release factor] + S-adenosyl-L-homocysteine + H(+). In terms of biological role, methylates the class 1 translation termination release factors RF1/PrfA and RF2/PrfB on the glutamine residue of the universally conserved GGQ motif. The polypeptide is Release factor glutamine methyltransferase (Aliivibrio fischeri (strain ATCC 700601 / ES114) (Vibrio fischeri)).